Reading from the N-terminus, the 544-residue chain is Homeobox protein B-H1 (544 aa).

A compositionally biased stretch (low complexity) spans 53–70 (STTTMSSGGSTTTASGIG). Disordered regions lie at residues 53 to 73 (STTTMSSGGSTTTASGIGKPN), 92 to 179 (YKQQ…PPTA), 236 to 308 (GGVG…AFTD), and 471 to 544 (AANP…QIQV). Over residues 95–105 (QQHHQQLHHHN) the composition is skewed to basic residues. A compositionally biased stretch (low complexity) spans 106–131 (NNNNSGSSGGSSPAHSNNNNNINGDN). Residues 156–172 (THPHTHPHALMHPHGKL) show a composition bias toward basic residues. Residues 247 to 262 (DLDDSSDYHEENEDCD) show a composition bias toward acidic residues. The span at 266-282 (MDDHSVCSNGGKDDDGN) shows a compositional bias: basic and acidic residues. The span at 283–293 (SVKSGSTSDMS) shows a compositional bias: polar residues. Positions 299–358 (QRKARTAFTDHQLQTLEKSFERQKYLSVQERQELAHKLDLSDCQVKTWYQNRRTKWKRQT) form a DNA-binding region, homeobox. Over residues 476-485 (GPHPVAPPPS) the composition is skewed to pro residues. Over residues 492–506 (PSGLVKPIPAHSASA) the composition is skewed to low complexity. The segment covering 507–516 (SPPPRPPSTP) has biased composition (pro residues).

Belongs to the Antp homeobox family. In terms of tissue distribution, B-H1 and B-H2 are abundant in the eye-antenna imaginal disk. Expressed in R1 and R6 cells throughout larval stage until 30 hours after puparium formation, at which time expression is seen in the anterior and posterior primary pigment cells. Coexpressed in embryonic glial cells, neurons of the CNS and PNS, most latitudinal anterior cells of the developing notum and the central circular region of the leg and antennal imaginal disk throughout larval development.

The protein localises to the nucleus. B-H1 and B-H2 are regulated by members of the wg signaling pathway; wg and dpp. B-H1 and B-H2 are coexpressed and functionally required in R1 and R6 receptor cells and primary pigment cells for normal eye development. Coexpression is also required for the fate determination of external sensory organs, formation of notal microchaetae, formation of presutural macrochaetae, antennal development and for distal leg morphogenesis; segmentation and specification of tarsal segments 3-5. The sequence is that of Homeobox protein B-H1 (B-H1) from Drosophila melanogaster (Fruit fly).